The primary structure comprises 433 residues: Glutamate-1-semialdehyde 2,1-aminomutase (433 aa).

At Lys-269 the chain carries N6-(pyridoxal phosphate)lysine.

The protein belongs to the class-III pyridoxal-phosphate-dependent aminotransferase family. HemL subfamily. In terms of assembly, homodimer. Requires pyridoxal 5'-phosphate as cofactor.

The protein resides in the cytoplasm. The enzyme catalyses (S)-4-amino-5-oxopentanoate = 5-aminolevulinate. Its pathway is porphyrin-containing compound metabolism; protoporphyrin-IX biosynthesis; 5-aminolevulinate from L-glutamyl-tRNA(Glu): step 2/2. The polypeptide is Glutamate-1-semialdehyde 2,1-aminomutase (Renibacterium salmoninarum (strain ATCC 33209 / DSM 20767 / JCM 11484 / NBRC 15589 / NCIMB 2235)).